The following is a 99-amino-acid chain: A-type ATP synthase subunit F (99 aa).

It belongs to the V-ATPase F subunit family. As to quaternary structure, has multiple subunits with at least A(3), B(3), C, D, E, F, H, I and proteolipid K(x).

The protein resides in the cell membrane. In terms of biological role, component of the A-type ATP synthase that produces ATP from ADP in the presence of a proton gradient across the membrane. The protein is A-type ATP synthase subunit F of Methanocella arvoryzae (strain DSM 22066 / NBRC 105507 / MRE50).